Reading from the N-terminus, the 337-residue chain is Aspartate carbamoyltransferase catalytic subunit (337 aa).

The carbamoyl phosphate site is built by arginine 54 and threonine 55. Lysine 82 contacts L-aspartate. Residues arginine 104, histidine 134, and glutamine 137 each coordinate carbamoyl phosphate. L-aspartate is bound by residues arginine 177 and arginine 232. Carbamoyl phosphate contacts are provided by glycine 277 and proline 278.

This sequence belongs to the aspartate/ornithine carbamoyltransferase superfamily. ATCase family. In terms of assembly, heterododecamer (2C3:3R2) of six catalytic PyrB chains organized as two trimers (C3), and six regulatory PyrI chains organized as three dimers (R2).

The catalysed reaction is carbamoyl phosphate + L-aspartate = N-carbamoyl-L-aspartate + phosphate + H(+). It functions in the pathway pyrimidine metabolism; UMP biosynthesis via de novo pathway; (S)-dihydroorotate from bicarbonate: step 2/3. Catalyzes the condensation of carbamoyl phosphate and aspartate to form carbamoyl aspartate and inorganic phosphate, the committed step in the de novo pyrimidine nucleotide biosynthesis pathway. In Arthrobacter sp. (strain FB24), this protein is Aspartate carbamoyltransferase catalytic subunit.